The sequence spans 462 residues: A-type ATP synthase subunit B (462 aa).

Belongs to the ATPase alpha/beta chains family. Has multiple subunits with at least A(3), B(3), C, D, E, F, H, I and proteolipid K(x).

The protein localises to the cell membrane. Functionally, component of the A-type ATP synthase that produces ATP from ADP in the presence of a proton gradient across the membrane. The B chain is a regulatory subunit. This is A-type ATP synthase subunit B from Pyrococcus abyssi (strain GE5 / Orsay).